The primary structure comprises 436 residues: Cytokine receptor-like factor 3 (436 aa).

Residues 9–87 (LMQEAWESID…VSAIEQENIK (79 aa)) are a coiled coil. The 94-residue stretch at 177–270 (PPVQIEELIE…LQTSRTTLVP (94 aa)) folds into the Fibronectin type-III domain.

Belongs to the cytokine receptor-like factor 3 family.

It is found in the cytoplasm. May play a role in the negative regulation of cell cycle progression. This Xenopus laevis (African clawed frog) protein is Cytokine receptor-like factor 3 (crlf3).